Consider the following 251-residue polypeptide: Eukaryotic translation initiation factor 3 subunit K (251 aa).

The PCI domain maps to 46–224; that stretch reads FDCYANLALL…VKVPTNKENE (179 aa).

The protein belongs to the eIF-3 subunit K family. Component of the eukaryotic translation initiation factor 3 (eIF-3) complex.

It localises to the cytoplasm. Its function is as follows. Component of the eukaryotic translation initiation factor 3 (eIF-3) complex, which is involved in protein synthesis of a specialized repertoire of mRNAs and, together with other initiation factors, stimulates binding of mRNA and methionyl-tRNAi to the 40S ribosome. The eIF-3 complex specifically targets and initiates translation of a subset of mRNAs involved in cell proliferation. The chain is Eukaryotic translation initiation factor 3 subunit K from Aspergillus oryzae (strain ATCC 42149 / RIB 40) (Yellow koji mold).